A 105-amino-acid polypeptide reads, in one-letter code: Protein METHYLENE BLUE SENSITIVITY 1 (105 aa).

Positions 26-46 are disordered; it reads RGGGKAGIADRTGKEKGGHAK. The segment covering 36–46 has biased composition (basic and acidic residues); it reads RTGKEKGGHAK.

In terms of tissue distribution, mainly expressed in the epidermis.

It localises to the nucleus. The protein resides in the cytoplasm. The protein localises to the stress granule. In terms of biological role, required for acclimation to reactive oxygen species (ROS) responses downstream of beta-cyclocitral (beta-cc) or mediated by dihydroactinidiolide, including singlet oxygen 1O(2) detoxification reactions, especially upon light-mediated photooxidative stress, and leading to programmed cell death. Prevents leaf senescence. Involved in cold acclimation. The chain is Protein METHYLENE BLUE SENSITIVITY 1 from Arabidopsis thaliana (Mouse-ear cress).